Consider the following 149-residue polypeptide: MPTRLTKTRKHRGNVSAGKGRIGKHRKHPGGRGKAGGQHHHRTNLDKYHPGYFGKVGMRYFHKQQNHFWRPEINLDKLWTLVDSEKKDEYLSKSSASAAPVIDTLAHGYGKVLGKGRLPEVPVIVKARFVSKLAEEKIRAVGGVVELVA.

Composition is skewed to basic residues over residues 1–13 (MPTRLTKTRKHRG) and 21–42 (RIGKHRKHPGGRGKAGGQHHHR). The segment at 1–44 (MPTRLTKTRKHRGNVSAGKGRIGKHRKHPGGRGKAGGQHHHRTN) is disordered.

This sequence belongs to the universal ribosomal protein uL15 family. Component of the large ribosomal subunit. Mature ribosomes consist of a small (40S) and a large (60S) subunit. The 40S subunit contains about 32 different proteins and 1 molecule of RNA (18S). The 60S subunit contains 45 different proteins and 3 molecules of RNA (25S, 5.8S and 5S).

It localises to the cytoplasm. Its function is as follows. Component of the ribosome, a large ribonucleoprotein complex responsible for the synthesis of proteins in the cell. The small ribosomal subunit (SSU) binds messenger RNAs (mRNAs) and translates the encoded message by selecting cognate aminoacyl-transfer RNA (tRNA) molecules. The large subunit (LSU) contains the ribosomal catalytic site termed the peptidyl transferase center (PTC), which catalyzes the formation of peptide bonds, thereby polymerizing the amino acids delivered by tRNAs into a polypeptide chain. The nascent polypeptides leave the ribosome through a tunnel in the LSU and interact with protein factors that function in enzymatic processing, targeting, and the membrane insertion of nascent chains at the exit of the ribosomal tunnel. The chain is Large ribosomal subunit protein uL15 from Candida albicans (strain SC5314 / ATCC MYA-2876) (Yeast).